A 141-amino-acid chain; its full sequence is MAKKLVGSMKLQVPAGQANPSPPVGPALGQRGINIMEFCKAFNAKTADMEPGAPCPTVITYYQDKSFTMDIKTPPASYYLKKAAKIKSGANNPSRETAGTVTAAQVKEIAEAKMKDLNANDIEAAMQIILGSARSMGIEVK.

It belongs to the universal ribosomal protein uL11 family. Part of the ribosomal stalk of the 50S ribosomal subunit. Interacts with L10 and the large rRNA to form the base of the stalk. L10 forms an elongated spine to which L12 dimers bind in a sequential fashion forming a multimeric L10(L12)X complex. One or more lysine residues are methylated.

Functionally, forms part of the ribosomal stalk which helps the ribosome interact with GTP-bound translation factors. In Ruegeria sp. (strain TM1040) (Silicibacter sp.), this protein is Large ribosomal subunit protein uL11.